We begin with the raw amino-acid sequence, 122 residues long: Large ribosomal subunit protein uL14 (122 aa).

This sequence belongs to the universal ribosomal protein uL14 family. In terms of assembly, part of the 50S ribosomal subunit. Forms a cluster with proteins L3 and L19. In the 70S ribosome, L14 and L19 interact and together make contacts with the 16S rRNA in bridges B5 and B8.

Binds to 23S rRNA. Forms part of two intersubunit bridges in the 70S ribosome. This chain is Large ribosomal subunit protein uL14, found in Helicobacter hepaticus (strain ATCC 51449 / 3B1).